The sequence spans 505 residues: Cobyric acid synthase (505 aa).

The GATase cobBQ-type domain occupies Asp-251–Phe-444. Cys-332 serves as the catalytic Nucleophile. His-436 is an active-site residue.

Belongs to the CobB/CobQ family. CobQ subfamily.

It functions in the pathway cofactor biosynthesis; adenosylcobalamin biosynthesis. Catalyzes amidations at positions B, D, E, and G on adenosylcobyrinic A,C-diamide. NH(2) groups are provided by glutamine, and one molecule of ATP is hydrogenolyzed for each amidation. This is Cobyric acid synthase from Clostridium novyi (strain NT).